Here is a 166-residue protein sequence, read N- to C-terminus: MEGWRISHLNEHKHERTIYVDADACPVKDEILSVASQFQIPVTFIASYEHFQTKRSPLEDWRFVDTHKEAADLVIANSVAAHDIVVTQDIGLASLLLPRQVIVLSERGRMYTNETIDFDLERRHVSSKQRRKGVYGKGPKKLLEEDKKRFIAQLQKILSNHEGFLN.

This sequence belongs to the UPF0178 family.

The chain is UPF0178 protein BPUM_2255 from Bacillus pumilus (strain SAFR-032).